The primary structure comprises 351 residues: UDP-N-acetylenolpyruvoylglucosamine reductase (351 aa).

Residues 25-196 form the FAD-binding PCMH-type domain; that stretch reads HIQAQARWLL…TAVEFRLPLL (172 aa). Arg173 is an active-site residue. Ser246 serves as the catalytic Proton donor. Residue Glu343 is part of the active site.

Belongs to the MurB family. It depends on FAD as a cofactor.

It is found in the cytoplasm. The catalysed reaction is UDP-N-acetyl-alpha-D-muramate + NADP(+) = UDP-N-acetyl-3-O-(1-carboxyvinyl)-alpha-D-glucosamine + NADPH + H(+). It participates in cell wall biogenesis; peptidoglycan biosynthesis. In terms of biological role, cell wall formation. The polypeptide is UDP-N-acetylenolpyruvoylglucosamine reductase (Xylella fastidiosa (strain M23)).